A 594-amino-acid polypeptide reads, in one-letter code: UvrABC system protein C (594 aa).

In terms of domain architecture, GIY-YIG spans 15–92 (DKPGCYQMKN…IQKFQPYYNI (78 aa)). Positions 197–232 (AKIKQSLQTKMQKASEAMEFERAADIRDQIHYIEVT) constitute a UVR domain.

Belongs to the UvrC family. As to quaternary structure, interacts with UvrB in an incision complex.

It localises to the cytoplasm. The UvrABC repair system catalyzes the recognition and processing of DNA lesions. UvrC both incises the 5' and 3' sides of the lesion. The N-terminal half is responsible for the 3' incision and the C-terminal half is responsible for the 5' incision. The protein is UvrABC system protein C of Pediococcus pentosaceus (strain ATCC 25745 / CCUG 21536 / LMG 10740 / 183-1w).